The chain runs to 403 residues: MSGSDAGLEEEPELSITLTLRMLMHGKEVGSIIGKKGETVKRIREQSSARITISEGSCPERITTITGSTAAVFHAVSMIAFKLDEDLCAAPANGGNVSRPPVTLRLVIPASQCGSLIGKAGTKIKEIRETTGAQVQVAGDLLPNSTERAVTVSGVPDAIILCVRQICAVILESPPKGATIPYHPSLSLGTVLLSTNQGFSVQGQYGTVTPAEVTKLQQLSGHAVPFASPSMVPGLDPSTQTSSQEFLVPNDLIGCVIGRQGSKISEIRQMSGAHIKIGNQAEGAGERHVTITGSPVSIALAQYLITACLETAKSTSGGTPGSAPTDLPAPFSPPLTALPTAPPGLLGTPYAISLSNFIGLKPVPFLALPPASPGPPPGLAAYTAKMAAANGSKKAERQKFSPY.

KH domains lie at 17-67, 101-154, and 241-293; these read TLTL…TITG, PVTL…TVSG, and TSSQ…TITG.

The protein resides in the cytoplasm. Its function is as follows. Single-stranded nucleic acid binding protein that binds preferentially to oligo dC. The sequence is that of Poly(rC)-binding protein 4 (PCBP4) from Bos taurus (Bovine).